We begin with the raw amino-acid sequence, 525 residues long: Zwittermicin A synthase ZmaJ (525 aa).

Belongs to the ATP-dependent AMP-binding enzyme family.

It carries out the reaction holo-[peptidyl-carrier protein] + L-serine + ATP = L-seryl-[peptidyl-carrier protein] + AMP + diphosphate. It participates in antibiotic biosynthesis. Involved in the biosynthesis of the linear aminopolyol antibiotic zwittermicin A (ZmA). Specifically adenylates L-serine and loads it onto the holo form of ZmaH via a thioester linkage to the phosphopanthetheine moiety. The chain is Zwittermicin A synthase ZmaJ from Bacillus cereus.